A 198-amino-acid chain; its full sequence is Nucleoid occlusion factor SlmA (198 aa).

An HTH tetR-type domain is found at 10-70 (NRREEILQSL…SLIEFIEDSL (61 aa)). Positions 33–52 (TTAKLAASVGVSEAALYRHF) form a DNA-binding region, H-T-H motif. The stretch at 117–144 (EQDRLQGRINQLFERIEAQLRQVLREKR) forms a coiled coil.

The protein belongs to the nucleoid occlusion factor SlmA family. As to quaternary structure, homodimer. Interacts with FtsZ.

The protein localises to the cytoplasm. It localises to the nucleoid. In terms of biological role, required for nucleoid occlusion (NO) phenomenon, which prevents Z-ring formation and cell division over the nucleoid. Acts as a DNA-associated cell division inhibitor that binds simultaneously chromosomal DNA and FtsZ, and disrupts the assembly of FtsZ polymers. SlmA-DNA-binding sequences (SBS) are dispersed on non-Ter regions of the chromosome, preventing FtsZ polymerization at these regions. This chain is Nucleoid occlusion factor SlmA, found in Citrobacter koseri (strain ATCC BAA-895 / CDC 4225-83 / SGSC4696).